The chain runs to 263 residues: 4-hydroxy-tetrahydrodipicolinate reductase (263 aa).

NAD(+)-binding positions include glycine 8–methionine 13, aspartate 34, glycine 97–threonine 99, and alanine 123–phenylalanine 126. Histidine 153 serves as the catalytic Proton donor/acceptor. Position 154 (histidine 154) interacts with (S)-2,3,4,5-tetrahydrodipicolinate. Lysine 157 functions as the Proton donor in the catalytic mechanism. Glycine 163 to threonine 164 provides a ligand contact to (S)-2,3,4,5-tetrahydrodipicolinate.

The protein belongs to the DapB family.

Its subcellular location is the cytoplasm. The catalysed reaction is (S)-2,3,4,5-tetrahydrodipicolinate + NAD(+) + H2O = (2S,4S)-4-hydroxy-2,3,4,5-tetrahydrodipicolinate + NADH + H(+). The enzyme catalyses (S)-2,3,4,5-tetrahydrodipicolinate + NADP(+) + H2O = (2S,4S)-4-hydroxy-2,3,4,5-tetrahydrodipicolinate + NADPH + H(+). The protein operates within amino-acid biosynthesis; L-lysine biosynthesis via DAP pathway; (S)-tetrahydrodipicolinate from L-aspartate: step 4/4. In terms of biological role, catalyzes the conversion of 4-hydroxy-tetrahydrodipicolinate (HTPA) to tetrahydrodipicolinate. This Carboxydothermus hydrogenoformans (strain ATCC BAA-161 / DSM 6008 / Z-2901) protein is 4-hydroxy-tetrahydrodipicolinate reductase.